Consider the following 466-residue polypeptide: Probable agmatine/putrescine antiporter AguD (466 aa).

12 helical membrane passes run 8 to 28 (FSLF…EAAA), 30 to 50 (VAAI…AFLL), 85 to 105 (ASWF…VLCP), 120 to 140 (ISLL…LYPV), 144 to 164 (VWIL…LGGL), 192 to 212 (LSFI…CTFA), 226 to 246 (IIIG…GIGV), 273 to 293 (WFIS…MVSW), 325 to 345 (WGAA…APLL), 350 to 370 (LFWS…IPVF), 398 to 418 (VYMA…AIPL), and 426 to 446 (TEQL…ELII).

This sequence belongs to the amino acid-polyamine-organocation (APC) superfamily. Glutamate:GABA antiporter (GGA) (TC 2.A.3.7) family.

The protein localises to the cell membrane. Functionally, probably catalyzes agmatine/putrescine exchange. This is Probable agmatine/putrescine antiporter AguD from Lactococcus lactis subsp. lactis (strain IL1403) (Streptococcus lactis).